Consider the following 351-residue polypeptide: UDP-3-O-acylglucosamine N-acyltransferase (351 aa).

The active-site Proton acceptor is His-240.

This sequence belongs to the transferase hexapeptide repeat family. LpxD subfamily. Homotrimer.

The catalysed reaction is a UDP-3-O-[(3R)-3-hydroxyacyl]-alpha-D-glucosamine + a (3R)-hydroxyacyl-[ACP] = a UDP-2-N,3-O-bis[(3R)-3-hydroxyacyl]-alpha-D-glucosamine + holo-[ACP] + H(+). It participates in bacterial outer membrane biogenesis; LPS lipid A biosynthesis. Catalyzes the N-acylation of UDP-3-O-acylglucosamine using 3-hydroxyacyl-ACP as the acyl donor. Is involved in the biosynthesis of lipid A, a phosphorylated glycolipid that anchors the lipopolysaccharide to the outer membrane of the cell. This is UDP-3-O-acylglucosamine N-acyltransferase from Pseudomonas putida (strain ATCC 700007 / DSM 6899 / JCM 31910 / BCRC 17059 / LMG 24140 / F1).